The following is a 93-amino-acid chain: Protein F-93 (93 aa).

Homodimer.

Functionally, probable transcription factor that recognizes a (pseudo-)palindromic DNA target sequence. In Saccharolobus solfataricus (Sulfolobus solfataricus), this protein is Protein F-93.